A 412-amino-acid chain; its full sequence is ATP phosphoribosyltransferase regulatory subunit (412 aa).

It belongs to the class-II aminoacyl-tRNA synthetase family. HisZ subfamily. Heteromultimer composed of HisG and HisZ subunits.

The protein resides in the cytoplasm. Its pathway is amino-acid biosynthesis; L-histidine biosynthesis; L-histidine from 5-phospho-alpha-D-ribose 1-diphosphate: step 1/9. In terms of biological role, required for the first step of histidine biosynthesis. May allow the feedback regulation of ATP phosphoribosyltransferase activity by histidine. The protein is ATP phosphoribosyltransferase regulatory subunit of Dehalococcoides mccartyi (strain ATCC BAA-2266 / KCTC 15142 / 195) (Dehalococcoides ethenogenes (strain 195)).